Consider the following 348-residue polypeptide: tRNA pseudouridine synthase D (348 aa).

The active-site Nucleophile is the Asp78. The TRUD domain occupies 150–304; sequence GLPNFFGPQR…AEGTRRAARL (155 aa).

It belongs to the pseudouridine synthase TruD family.

The enzyme catalyses uridine(13) in tRNA = pseudouridine(13) in tRNA. In terms of biological role, responsible for synthesis of pseudouridine from uracil-13 in transfer RNAs. This is tRNA pseudouridine synthase D from Anaeromyxobacter dehalogenans (strain 2CP-1 / ATCC BAA-258).